The primary structure comprises 200 residues: Large ribosomal subunit protein uL4 (200 aa).

The disordered stretch occupies residues 38–75 (GRQGSKQQKNRSDVSGGGKRPWRQKGTGRARAGTSRGP).

This sequence belongs to the universal ribosomal protein uL4 family. In terms of assembly, part of the 50S ribosomal subunit.

Functionally, one of the primary rRNA binding proteins, this protein initially binds near the 5'-end of the 23S rRNA. It is important during the early stages of 50S assembly. It makes multiple contacts with different domains of the 23S rRNA in the assembled 50S subunit and ribosome. Forms part of the polypeptide exit tunnel. In Azotobacter vinelandii (strain DJ / ATCC BAA-1303), this protein is Large ribosomal subunit protein uL4.